We begin with the raw amino-acid sequence, 338 residues long: MKEFRKILEDKAFFFTTLYILISFLVFKIFPDVFAVIVLMVFFTLLLDPVIRFLEKLKFGKYFSRVAALLLFFFVMVYSLYMIIPPVFNEFGSFIEFMTKVFESKIWKDYIKSPELMPVFDKIMNFLEPKLTDFLNYVFSLVTTNFVSVTTIIVFTLFGLGYTVFYIREIASFFVLIYPKSVRAEAREFFRDVYASMGRYIRVIFINAVIIGLSYWIVFEAFNLKYSAIISLWAFVTNFIPIVGVVLEYIPVLLFSLTLGVKGVLLIALFAILIHAVAFVVFIQLMKGLEKLNPVYIILSILFFGKLFGLFGSFVGVPLALFFKVFWRKFLRPLFEAG.

The next 7 membrane-spanning stretches (helical) occupy residues 20–40 (ILIS…IVLM), 68–88 (ALLL…PPVF), 147–167 (VSVT…VFYI), 203–223 (VIFI…EAFN), 239–259 (FIPI…SLTL), 263–283 (GVLL…VVFI), and 297–317 (IILS…FVGV).

This sequence belongs to the autoinducer-2 exporter (AI-2E) (TC 2.A.86) family.

Its subcellular location is the cell membrane. In Thermotoga maritima (strain ATCC 43589 / DSM 3109 / JCM 10099 / NBRC 100826 / MSB8), this protein is Putative transport protein TM_1349.